A 320-amino-acid polypeptide reads, in one-letter code: ATP-dependent 6-phosphofructokinase (320 aa).

G12 lines the ATP pocket. Residues 22-26 and 55-60 contribute to the ADP site; these read RGVVR and RYSVSD. ATP-binding positions include 73 to 74 and 103 to 106; these read RF and GDGS. Mg(2+) is bound at residue D104. 126 to 128 lines the substrate pocket; sequence TID. D128 functions as the Proton acceptor in the catalytic mechanism. R155 is an ADP binding site. Residues R163 and 170–172 each bind substrate; that span reads MGR. ADP is bound by residues 186-188, K212, and 214-216; these read GCE and KKH. Substrate is bound by residues E223, R244, and 250–253; that span reads HIQR.

Belongs to the phosphofructokinase type A (PFKA) family. ATP-dependent PFK group I subfamily. Prokaryotic clade 'B1' sub-subfamily. As to quaternary structure, homotetramer. Requires Mg(2+) as cofactor.

The protein localises to the cytoplasm. The enzyme catalyses beta-D-fructose 6-phosphate + ATP = beta-D-fructose 1,6-bisphosphate + ADP + H(+). Its pathway is carbohydrate degradation; glycolysis; D-glyceraldehyde 3-phosphate and glycerone phosphate from D-glucose: step 3/4. Allosterically activated by ADP and other diphosphonucleosides, and allosterically inhibited by phosphoenolpyruvate. Catalyzes the phosphorylation of D-fructose 6-phosphate to fructose 1,6-bisphosphate by ATP, the first committing step of glycolysis. This Erwinia tasmaniensis (strain DSM 17950 / CFBP 7177 / CIP 109463 / NCPPB 4357 / Et1/99) protein is ATP-dependent 6-phosphofructokinase.